We begin with the raw amino-acid sequence, 933 residues long: Thyroid peroxidase (933 aa).

Positions 1 to 18 (MRALAVLSVTLVMACTEA) are cleaved as a signal peptide. Residues 19-846 (FFPFISRGKE…TCVDSGRLPR (828 aa)) are Extracellular-facing. Asn129 carries N-linked (GlcNAc...) asparagine glycosylation. Cys142 and Cys158 are oxidised to a cystine. Residue Asp238 coordinates heme b. Catalysis depends on His239, which acts as the Proton acceptor. Ca(2+) is bound at residue Asp240. 2 disulfide bridges follow: Cys259/Cys269 and Cys263/Cys286. Asn307 carries an N-linked (GlcNAc...) asparagine glycan. Ca(2+)-binding residues include Thr321, Phe323, Asp325, and Ser327. Asn342 is a glycosylation site (N-linked (GlcNAc...) asparagine). Residues Glu399 and His494 each contribute to the heme b site. A glycan (N-linked (GlcNAc...) asparagine) is linked at Asn569. Disulfide bonds link Cys598-Cys655 and Cys696-Cys721. Residues 740 to 795 (DKCGFPESVENGDFVHCEESGRRVLVYSCRHGYELQGREQLTCTQEGWDFQPPLCK) enclose the Sushi domain. The EGF-like; calcium-binding domain occupies 796–839 (DVNECADGAHPPCHASARCRNTKGGFQCLCADPYELGDDGRTCV). Disulfide bonds link Cys800/Cys814, Cys808/Cys823, and Cys825/Cys838. A helical transmembrane segment spans residues 847–871 (VTWISMSLAALLIGGFAGLTSTVIC). The Cytoplasmic portion of the chain corresponds to 872–933 (RWTRTGTKST…RDTHRLPRAL (62 aa)). Residues 881-933 (TLPISETGGGTPELRCGKHQAVGTSPQRAAAQDSEQESAGMEGRDTHRLPRAL) are disordered. Residues 922 to 933 (EGRDTHRLPRAL) are compositionally biased toward basic and acidic residues.

Belongs to the peroxidase family. XPO subfamily. Interacts with DUOX1, DUOX2 and CYBA. Requires Ca(2+) as cofactor. The cofactor is heme b. Post-translationally, glycosylated. Heme is covalently bound through a H(2)O(2)-dependent autocatalytic process. Heme insertion is important for the delivery of protein at the cell surface. In terms of processing, cleaved in its N-terminal part.

It is found in the membrane. It localises to the cell surface. The enzyme catalyses 2 iodide + H2O2 + 2 H(+) = diiodine + 2 H2O. The catalysed reaction is [thyroglobulin]-L-tyrosine + iodide + H2O2 + H(+) = [thyroglobulin]-3-iodo-L-tyrosine + 2 H2O. It carries out the reaction [thyroglobulin]-3-iodo-L-tyrosine + iodide + H2O2 + H(+) = [thyroglobulin]-3,5-diiodo-L-tyrosine + 2 H2O. It catalyses the reaction 2 [thyroglobulin]-3,5-diiodo-L-tyrosine + H2O2 = [thyroglobulin]-L-thyroxine + [thyroglobulin]-dehydroalanine + 2 H2O. The enzyme catalyses [thyroglobulin]-3-iodo-L-tyrosine + [thyroglobulin]-3,5-diiodo-L-tyrosine + H2O2 = [thyroglobulin]-3,3',5-triiodo-L-thyronine + [thyroglobulin]-dehydroalanine + 2 H2O. Its pathway is hormone biosynthesis; thyroid hormone biosynthesis. In terms of biological role, iodination and coupling of the hormonogenic tyrosines in thyroglobulin to yield the thyroid hormones T(3) and T(4). The protein is Thyroid peroxidase of Homo sapiens (Human).